A 181-amino-acid chain; its full sequence is Cytolethal distending toxin subunit C (181 aa).

Residues 1–15 (MKKLAIVFTMLLIAG) form the signal peptide. Residue C16 is the site of N-palmitoyl cysteine attachment. C16 carries S-diacylglycerol cysteine lipidation. The region spanning 79–181 (QSGWIMIRTP…NPLNTESPII (103 aa)) is the Ricin B-type lectin domain.

In terms of assembly, heterotrimer of 3 subunits, CdtA, CdtB and CdtC.

It localises to the cell outer membrane. In terms of biological role, part of the tripartite complex that is required for the CDT activity. CdtC, along with CdtA, probably forms a heterodimeric subunit required for the delivery of CdtB. The sequence is that of Cytolethal distending toxin subunit C (cdtC) from Escherichia coli.